The following is a 99-amino-acid chain: Putative type 4B encapsulin shell protein PF1875 (99 aa).

Belongs to the encapsulin family. Family 4B subfamily. In terms of assembly, may self-assemble into facets and potentially into larger complexes.

It localises to the encapsulin nanocompartment. Functionally, may be the encapsulin shell protein in a type 4 A-domain encapsulin nanocompartment system. Its cargo may be upstream glyceraldehyde-3-phosphate dehydrogenase (AC P61879). The protein is Putative type 4B encapsulin shell protein PF1875 of Pyrococcus furiosus (strain ATCC 43587 / DSM 3638 / JCM 8422 / Vc1).